We begin with the raw amino-acid sequence, 955 residues long: Glycine dehydrogenase (decarboxylating) (955 aa).

K702 carries the post-translational modification N6-(pyridoxal phosphate)lysine.

It belongs to the GcvP family. As to quaternary structure, the glycine cleavage system is composed of four proteins: P, T, L and H. Pyridoxal 5'-phosphate is required as a cofactor.

It catalyses the reaction N(6)-[(R)-lipoyl]-L-lysyl-[glycine-cleavage complex H protein] + glycine + H(+) = N(6)-[(R)-S(8)-aminomethyldihydrolipoyl]-L-lysyl-[glycine-cleavage complex H protein] + CO2. In terms of biological role, the glycine cleavage system catalyzes the degradation of glycine. The P protein binds the alpha-amino group of glycine through its pyridoxal phosphate cofactor; CO(2) is released and the remaining methylamine moiety is then transferred to the lipoamide cofactor of the H protein. The polypeptide is Glycine dehydrogenase (decarboxylating) (Bordetella avium (strain 197N)).